Here is a 289-residue protein sequence, read N- to C-terminus: Agroclavine dehydrogenase (289 aa).

It belongs to the fgaFS/easG family. As to quaternary structure, monomer.

It catalyses the reaction agroclavine + NADP(+) = didehydroagroclavine + NADPH + H(+). It participates in alkaloid biosynthesis; ergot alkaloid biosynthesis. In terms of biological role, agroclavine dehydrogenase; part of the gene cluster that mediates the biosynthesis of fungal ergot alkaloid ergovaline, the predominant ergopeptine product in E.festucae var. lolii. DmaW catalyzes the first step of ergot alkaloid biosynthesis by condensing dimethylallyl diphosphate (DMAP) and tryptophan to form 4-dimethylallyl-L-tryptophan. The second step is catalyzed by the methyltransferase easF that methylates 4-dimethylallyl-L-tryptophan in the presence of S-adenosyl-L-methionine, resulting in the formation of 4-dimethylallyl-L-abrine. The catalase easC and the FAD-dependent oxidoreductase easE then transform 4-dimethylallyl-L-abrine to chanoclavine-I which is further oxidized by easD in the presence of NAD(+), resulting in the formation of chanoclavine-I aldehyde. Agroclavine dehydrogenase easG then mediates the conversion of chanoclavine-I aldehyde to agroclavine via a non-enzymatic adduct reaction: the substrate is an iminium intermediate that is formed spontaneously from chanoclavine-I aldehyde in the presence of glutathione. Further conversion of agroclavine to paspalic acid is a two-step process involving oxidation of agroclavine to elymoclavine and of elymoclavine to paspalic acid, the second step being performed by the elymoclavine oxidase cloA. However, cloA does not encode a functional enzyme indicating that C.fusiformis terminates its ergot alkaloid pathway at elymoclavine. This chain is Agroclavine dehydrogenase, found in Claviceps fusiformis (Ergot fungus).